The primary structure comprises 189 residues: UPF0301 protein PST_3956 (189 aa).

Belongs to the UPF0301 (AlgH) family.

The protein is UPF0301 protein PST_3956 of Stutzerimonas stutzeri (strain A1501) (Pseudomonas stutzeri).